The chain runs to 160 residues: Xanthine-guanine phosphoribosyltransferase (160 aa).

5-phospho-alpha-D-ribose 1-diphosphate contacts are provided by residues 41–42 and 93–101; these read RG and DDLVDTGRT. Residue Asp-94 participates in Mg(2+) binding. Residues Asp-97 and Ile-140 each coordinate guanine. Residues Asp-97 and Ile-140 each coordinate xanthine. GMP contacts are provided by residues 97–101 and 139–140; these read DTGRT and WI.

This sequence belongs to the purine/pyrimidine phosphoribosyltransferase family. XGPT subfamily. Homotetramer. Mg(2+) is required as a cofactor.

The protein resides in the cell inner membrane. The catalysed reaction is GMP + diphosphate = guanine + 5-phospho-alpha-D-ribose 1-diphosphate. It catalyses the reaction XMP + diphosphate = xanthine + 5-phospho-alpha-D-ribose 1-diphosphate. It carries out the reaction IMP + diphosphate = hypoxanthine + 5-phospho-alpha-D-ribose 1-diphosphate. The protein operates within purine metabolism; GMP biosynthesis via salvage pathway; GMP from guanine: step 1/1. It functions in the pathway purine metabolism; XMP biosynthesis via salvage pathway; XMP from xanthine: step 1/1. Purine salvage pathway enzyme that catalyzes the transfer of the ribosyl-5-phosphate group from 5-phospho-alpha-D-ribose 1-diphosphate (PRPP) to the N9 position of the 6-oxopurines guanine and xanthine to form the corresponding ribonucleotides GMP (guanosine 5'-monophosphate) and XMP (xanthosine 5'-monophosphate), with the release of PPi. To a lesser extent, also acts on hypoxanthine. This Desulfotalea psychrophila (strain LSv54 / DSM 12343) protein is Xanthine-guanine phosphoribosyltransferase.